Reading from the N-terminus, the 1336-residue chain is Adhesion G protein-coupled receptor A2 (1336 aa).

Positions 1 to 33 are cleaved as a signal peptide; sequence MGAGGRRMPVPPARLLLLPLLPCLLLLAPGTRG. The Extracellular portion of the chain corresponds to 34 to 769; the sequence is APGCPVPIRG…AGGSGAGLHP (736 aa). N-linked (GlcNAc...) asparagine glycans are attached at residues Asn84 and Asn101. LRR repeat units lie at residues 85-106, 109-130, 133-154, and 157-178; these read GTIT…SFLG, LLEK…AFLG, ELKR…TFQG, and RLLR…VFDE. Residue Asn162 is glycosylated (N-linked (GlcNAc...) asparagine). The 52-residue stretch at 190-241 folds into the LRRCT domain; it reads EFLTCDCRLRWLLPWARNHSLQLSERTLCAYPSALHAHALSSLQESQLRCEG. One can recognise an Ig-like domain in the interval 247–344; sequence THYLIPSLRQ…GNTSKKVEIV (98 aa). Cys268 and Cys328 are oxidised to a cystine. N-linked (GlcNAc...) asparagine glycosylation is present at Asn275. Positions 362-364 match the RGD motif; that stretch reads RGD. The GAIN-B domain maps to 594–757; it reads FRCTTGRPNI…AVLMELNAFP (164 aa). 3 N-linked (GlcNAc...) asparagine glycosylation sites follow: Asn602, Asn691, and Asn735. The tract at residues 711–757 is GPS; the sequence is AAWWNQDGPGGWSSEGCRLRYSQPNVSSLYCQHLGNVAVLMELNAFP. Residues Cys727 and Cys741 are joined by a disulfide bond. The helical transmembrane segment at 770-790 threads the bilayer; sequence VVYPCTALLLLCLFSTIITYI. The Cytoplasmic portion of the chain corresponds to 791 to 805; the sequence is LNHSSIHVSRKGWHM. A helical transmembrane segment spans residues 806 to 826; that stretch reads LLNLCFHMAMTSAVFVGGVTL. The Extracellular portion of the chain corresponds to 827–830; that stretch reads TNYQ. Residues 831 to 851 form a helical membrane-spanning segment; it reads MVCQAVGITLHYSSLSSLLWM. At 852 to 884 the chain is on the cytoplasmic side; sequence GVKARVLHKELSWRAPPLEEGEAAPPGPRPMLR. Residues 885–905 traverse the membrane as a helical segment; it reads FYLIAGGIPLIICGITAAVNI. The Extracellular segment spans residues 906 to 922; that stretch reads HNYRDHSPYCWLVWRPS. The helical transmembrane segment at 923–943 threads the bilayer; the sequence is LGAFYIPVALILPITWIYFLC. The Cytoplasmic portion of the chain corresponds to 944–1016; sequence AGLHLRSHVA…DGVYSPGVQL (73 aa). The helical transmembrane segment at 1017-1037 threads the bilayer; it reads GALMTTHFLYLAMWACGALAV. Residues 1038–1044 are Extracellular-facing; the sequence is SQRWLPR. Residues 1045–1065 traverse the membrane as a helical segment; it reads VVCSCLYGVAASALGLFVFTH. Residues 1066 to 1336 are Cytoplasmic-facing; sequence HCARRRDVRA…TGLWKSETTV (271 aa). The span at 1084 to 1095 shows a compositional bias: low complexity; the sequence is ASPSASHVPARA. Positions 1084–1310 are disordered; sequence ASPSASHVPA…NGAPKGGKYE (227 aa). Position 1104 is a phosphoserine (Ser1104). The span at 1110–1124 shows a compositional bias: low complexity; it reads GPASLKSSPSGSSGR. Residues 1133–1143 show a composition bias toward polar residues; sequence TNLQVAQSQVC. Residues 1166 to 1186 are compositionally biased toward basic residues; it reads PRHHNNLHHGRRVHKSRAKGH. Polar residues predominate over residues 1213 to 1234; that stretch reads SSESGSLHNSPSDSYPGSSRNS. Residues 1333 to 1336 carry the PDZ-binding motif; sequence ETTV.

This sequence belongs to the G-protein coupled receptor 2 family. Adhesion G-protein coupled receptor (ADGR) subfamily. In terms of assembly, interacts with RECK; the interaction is direct. Interacts (via PDZ-binding motif) with DLG1 (via PDZ domains). The cleaved extracellular subunit interacts with the integrin heterodimer ITGAV:ITGB3. Glycosylated. In terms of processing, proteolytically cleaved into two subunits, an extracellular subunit and a seven-transmembrane subunit. Cleaved by thrombin (F2) and MMP1. Also cleaved by MMP9, with lower efficiency. Presence of the protein disulfide-isomerase P4HB at the cell surface is additionally required for shedding of the extracellular subunit, suggesting that the subunits are linked by disulfide bonds. Shedding is enhanced by the growth factor FGF2 and may promote cell survival during angiogenesis. Abundantly expressed in the vasculature of the developing embryo. Expression in normal adult tissues is specifically vascular with endothelial expression in CNS, including brain and retina and more widespread pericyte expression in the brain and organs, including the kidney, pancreas and corpus luteum.

The protein localises to the cell membrane. Its subcellular location is the cell projection. It is found in the filopodium. Functionally, endothelial receptor which functions together with RECK to enable brain endothelial cells to selectively respond to Wnt7 signals (WNT7A or WNT7B). Plays a key role in Wnt7-specific responses, such as endothelial cell sprouting and migration in the forebrain and neural tube, and establishment of the blood-brain barrier. Acts as a Wnt7-specific coactivator of canonical Wnt signaling: required to deliver RECK-bound Wnt7 to frizzled by assembling a higher-order RECK-ADGRA2-Fzd-LRP5-LRP6 complex. ADGRA2-tethering function does not rely on its G-protein coupled receptor (GPCR) structure but instead on its combined capacity to interact with RECK extracellularly and recruit the Dishevelled scaffolding protein intracellularly. Binds to the glycosaminoglycans heparin, heparin sulfate, chondroitin sulfate and dermatan sulfate. The chain is Adhesion G protein-coupled receptor A2 from Mus musculus (Mouse).